The sequence spans 365 residues: GTPase Obg (365 aa).

The Obg domain occupies 2-160; that stretch reads ESFVDEVAIE…KFLRLSLKLL (159 aa). In terms of domain architecture, OBG-type G spans 161 to 329; sequence ADVGIVGLPN…LLEAMDEAFF (169 aa). Residues 167–174, 192–196, 215–218, 282–285, and 310–312 contribute to the GTP site; these read GLPNAGKS, FTTLS, DIPG, NKID, and SAD. 2 residues coordinate Mg(2+): S174 and T194.

It belongs to the TRAFAC class OBG-HflX-like GTPase superfamily. OBG GTPase family. In terms of assembly, monomer. Requires Mg(2+) as cofactor.

The protein resides in the cytoplasm. In terms of biological role, an essential GTPase which binds GTP, GDP and possibly (p)ppGpp with moderate affinity, with high nucleotide exchange rates and a fairly low GTP hydrolysis rate. Plays a role in control of the cell cycle, stress response, ribosome biogenesis and in those bacteria that undergo differentiation, in morphogenesis control. The polypeptide is GTPase Obg (Leptospira borgpetersenii serovar Hardjo-bovis (strain JB197)).